The primary structure comprises 208 residues: Ribosome maturation factor RimP (208 aa).

The segment at 175–208 is disordered; the sequence is GEDVEDLVADPGADDELDELDELDELDDGDEDEQ. The span at 177–208 shows a compositional bias: acidic residues; it reads DVEDLVADPGADDELDELDELDELDDGDEDEQ.

This sequence belongs to the RimP family.

It localises to the cytoplasm. Its function is as follows. Required for maturation of 30S ribosomal subunits. The sequence is that of Ribosome maturation factor RimP from Kineococcus radiotolerans (strain ATCC BAA-149 / DSM 14245 / SRS30216).